Here is a 298-residue protein sequence, read N- to C-terminus: DNA-binding transcriptional activator HetR (298 aa).

Residue serine 152 is part of the active site.

It belongs to the peptidase S48 family. Homodimer; disulfide-linked.

Controls heterocyst differentiation. Dimerization is required for DNA-binding. Has both a protease and a DNA-binding activity. In Nostoc sp. (strain PCC 9229), this protein is DNA-binding transcriptional activator HetR.